A 313-amino-acid chain; its full sequence is PDZ domain-containing protein GIPC2 (313 aa).

The segment covering 14 to 27 (KETSRLVEGEHTDA) has biased composition (basic and acidic residues). A disordered region spans residues 14–34 (KETSRLVEGEHTDAAVRSLPS). A PDZ domain is found at 117-197 (EVNVYKSEDS…EELFTLTLIE (81 aa)).

Belongs to the GIPC family. In terms of assembly, probably interacts with SEMA5A.

It localises to the cytoplasm. This chain is PDZ domain-containing protein GIPC2 (GIPC2), found in Bos taurus (Bovine).